Consider the following 354-residue polypeptide: Transcription factor HHO2 (354 aa).

Positions 93–102 (VQEEEEEDGE) are enriched in acidic residues. Positions 93-112 (VQEEEEEDGEHESSPELVNN) are disordered. The segment covering 103 to 112 (HESSPELVNN) has biased composition (basic and acidic residues). In terms of domain architecture, HTH myb-type spans 212–272 (THRKQRRCWS…HLQKYRLHTR (61 aa)). The segment at residues 243–268 (PKQIRDHMKVDGLTNDEVKSHLQKYR) is a DNA-binding region (H-T-H motif). The tract at residues 324–354 (VAQSPKRSLERSCNSPAASSSTNTNTSTPVS) is disordered. Residues 337–354 (NSPAASSSTNTNTSTPVS) show a composition bias toward low complexity.

The protein localises to the nucleus. Probable transcription factor involved in phosphate homeostasis. Involved in the regulation of the developmental response of lateral roots, acquisition and/or mobilization of phosphate and expression of a subset of genes involved in phosphate sensing and signaling pathway. Is a target of the transcription factor PHR1. This is Transcription factor HHO2 from Arabidopsis thaliana (Mouse-ear cress).